The chain runs to 317 residues: MDRLDLIKRNVQEIVTEGELEELLNKKKAPRAYVGYEPSGKIHMGHVLTVNKLIDLQKAGFEITVLLADVHAYLNRKGTLEEVRKIADYNKRCFIALGLDKEKTNFVYGSDYQLGAEYMLNVLKLSRSVTLNRARRSMDEVGRAMDDPTVSQMVYPLMQAIDIAMLGVDIAVGGIDQRKIHMLARENLKNLGFETPICIHTPILLGLDGTKMASSKENFISVDDTEEEIYRKLKKAYCKIGDTEENPILALFRYHIFPRYETIVIERPEKFGGNITYTSYEEMENAFVAESVHPMDLKNSAAKYINEILDPVRKVLL.

Y33 provides a ligand contact to L-tyrosine. Positions 38–46 (PSGKIHMGH) match the 'HIGH' region motif. Residues Y155, Q159, D162, and Q177 each coordinate L-tyrosine. Residues 211–215 (KMASS) carry the 'KMSKS' region motif. S214 contributes to the ATP binding site.

It belongs to the class-I aminoacyl-tRNA synthetase family. TyrS type 3 subfamily. As to quaternary structure, homodimer.

The protein localises to the cytoplasm. The catalysed reaction is tRNA(Tyr) + L-tyrosine + ATP = L-tyrosyl-tRNA(Tyr) + AMP + diphosphate + H(+). Functionally, catalyzes the attachment of tyrosine to tRNA(Tyr) in a two-step reaction: tyrosine is first activated by ATP to form Tyr-AMP and then transferred to the acceptor end of tRNA(Tyr). This Methanosarcina barkeri (strain Fusaro / DSM 804) protein is Tyrosine--tRNA ligase.